Consider the following 433-residue polypeptide: MGFRIYEIKARQIIDSRGNPTVEADVILEDGSLGRAAVPSGASTGINEAVELRDGDKSVYMGKGVLKAVENIINIISPELEGMSALNQVEIDRKMLALDGTPNKSKLGANAILAVSMATARAAAEYLGLKVYQYLGAYKANILPTPMCNIINGGAHSDNCVDFQEFMIMPIGAKTFNDAIRMSAEVFHTLKGILSKRGYATSVGDEGGFAPNLKSNEEACEVIMEAIKNAGYTPGTDIAIALDPATSELYDPETKKYVLRWSTKEELTSEEMVEYWAKWVEKYPIISIEDGMAEEDWDGWKKLTDKIGDKVQLVGDDLFVTNTSFLKKGIEMKVANAILIKVNQIGTLTETFEAVEMAKKAGYTAIVSHRSGETEDTTIADLVVALGTGQIKTGSLSRTDRIAKYNQLLRIEEELGSIAEYHGRDVFYSIKKQ.

Q164 contributes to the (2R)-2-phosphoglycerate binding site. Catalysis depends on E206, which acts as the Proton donor. Mg(2+) contacts are provided by D243, E289, and D316. (2R)-2-phosphoglycerate is bound by residues K341, R370, S371, and K392. The active-site Proton acceptor is K341.

The protein belongs to the enolase family. Mg(2+) is required as a cofactor.

Its subcellular location is the cytoplasm. The protein resides in the secreted. The protein localises to the cell surface. It catalyses the reaction (2R)-2-phosphoglycerate = phosphoenolpyruvate + H2O. It functions in the pathway carbohydrate degradation; glycolysis; pyruvate from D-glyceraldehyde 3-phosphate: step 4/5. Its function is as follows. Catalyzes the reversible conversion of 2-phosphoglycerate (2-PG) into phosphoenolpyruvate (PEP). It is essential for the degradation of carbohydrates via glycolysis. In Borrelia hermsii (strain HS1 / DAH), this protein is Enolase.